The primary structure comprises 669 residues: Cysteine-rich receptor-like protein kinase 10 (669 aa).

An N-terminal signal peptide occupies residues 1 to 34 (MRRNTDQESPIMSYYSSFFFLFLFSFLTSFRVSA). Over 35–285 (QDPTYVYHTC…PRSGKDGNSK (251 aa)) the chain is Extracellular. 2 consecutive Gnk2-homologous domains span residues 38–142 (TYVY…NQNI) and 148–252 (TTGG…IYAF). N-linked (GlcNAc...) asparagine glycans are attached at residues Asn-49, Asn-53, Asn-71, and Asn-80. 2 disulfide bridges follow: Cys-96-Cys-105 and Cys-108-Cys-133. 4 N-linked (GlcNAc...) asparagine glycosylation sites follow: Asn-114, Asn-159, Asn-185, and Asn-196. 2 disulfides stabilise this stretch: Cys-209/Cys-218 and Cys-221/Cys-243. Residues 260-274 (PPPPPPSISTPPVSA) show a composition bias toward pro residues. The interval 260–280 (PPPPPPSISTPPVSAPPRSGK) is disordered. The helical transmembrane segment at 286–306 (VLVIAIVVPIIVAVLLFIAGY) threads the bilayer. Over 307–669 (CFLTRRARKS…DASITDIHPR (363 aa)) the chain is Cytoplasmic. The 287-residue stretch at 348-634 (FVESNKIGQG…TLPVPRQPGL (287 aa)) folds into the Protein kinase domain. Residues 354–362 (IGQGGFGEV) and Lys-376 contribute to the ATP site. The residue at position 421 (Tyr-421) is a Phosphotyrosine. Residue Asp-473 is the Proton acceptor of the active site. Ser-477 is subject to Phosphoserine. Thr-513 is modified (phosphothreonine). Phosphotyrosine is present on Tyr-521.

It belongs to the protein kinase superfamily. Ser/Thr protein kinase family. CRK subfamily. In terms of assembly, interacts with CRKIP1 (KAPP), CRKIP2 and CRKIP3, three kinase-associated type 2C proteins.

The protein localises to the membrane. The catalysed reaction is L-seryl-[protein] + ATP = O-phospho-L-seryl-[protein] + ADP + H(+). It catalyses the reaction L-threonyl-[protein] + ATP = O-phospho-L-threonyl-[protein] + ADP + H(+). This is Cysteine-rich receptor-like protein kinase 10 (CRK10) from Arabidopsis thaliana (Mouse-ear cress).